Here is a 296-residue protein sequence, read N- to C-terminus: 4-hydroxy-tetrahydrodipicolinate synthase (296 aa).

Pyruvate is bound at residue Thr-49. The active-site Proton donor/acceptor is the Tyr-137. The active-site Schiff-base intermediate with substrate is the Lys-166. Residue Ile-208 coordinates pyruvate.

The protein belongs to the DapA family. Homotetramer; dimer of dimers.

It is found in the cytoplasm. It carries out the reaction L-aspartate 4-semialdehyde + pyruvate = (2S,4S)-4-hydroxy-2,3,4,5-tetrahydrodipicolinate + H2O + H(+). It functions in the pathway amino-acid biosynthesis; L-lysine biosynthesis via DAP pathway; (S)-tetrahydrodipicolinate from L-aspartate: step 3/4. In terms of biological role, catalyzes the condensation of (S)-aspartate-beta-semialdehyde [(S)-ASA] and pyruvate to 4-hydroxy-tetrahydrodipicolinate (HTPA). The chain is 4-hydroxy-tetrahydrodipicolinate synthase from Chlorobium phaeovibrioides (strain DSM 265 / 1930) (Prosthecochloris vibrioformis (strain DSM 265)).